Consider the following 634-residue polypeptide: tRNA uridine 5-carboxymethylaminomethyl modification enzyme MnmG (634 aa).

Gly14–Gly19 serves as a coordination point for FAD. Residue Gly279–Phe293 participates in NAD(+) binding.

The protein belongs to the MnmG family. Homodimer. Heterotetramer of two MnmE and two MnmG subunits. The cofactor is FAD.

Its subcellular location is the cytoplasm. Its function is as follows. NAD-binding protein involved in the addition of a carboxymethylaminomethyl (cmnm) group at the wobble position (U34) of certain tRNAs, forming tRNA-cmnm(5)s(2)U34. This is tRNA uridine 5-carboxymethylaminomethyl modification enzyme MnmG from Xanthomonas campestris pv. campestris (strain B100).